Reading from the N-terminus, the 321-residue chain is Torsin-2A (321 aa).

A signal peptide spans 1 to 26 (MAAATRGCRPWGSLLGLLGLVSAAAA). 93 to 100 (GWTGTGKS) is an ATP binding site. Residue Asn-149 is glycosylated (N-linked (GlcNAc...) asparagine).

This sequence belongs to the ClpA/ClpB family. Torsin subfamily. In terms of assembly, homohexamer. Interacts with TOR1AIP1. As to expression, isoform 1 is expressed ubiquitously, except in cardiac and endothelial tissues.

The protein resides in the endoplasmic reticulum lumen. This is Torsin-2A (TOR2A) from Homo sapiens (Human).